Reading from the N-terminus, the 811-residue chain is TLR4 interactor with leucine rich repeats (811 aa).

Residues 1–25 (MEGVGAVRFWLVVCGCLAFPPRAES) form the signal peptide. The region spanning 26 to 57 (VCPERCDCQHPQHLLCTNRGLRAVPKTSSLPS) is the LRRNT domain. At 26–696 (VCPERCDCQH…AGGRGGVDYQ (671 aa)) the chain is on the extracellular side. 12 LRR repeats span residues 61–81 (VLTY…DFHR), 84–105 (QLRR…TFEK), 108–129 (RLEE…TLAP), 132–153 (KLRI…SFEG), 156–177 (SLVK…VFAP), 180–201 (NLLY…AFTQ), 204–223 (KLRF…RHAA), 230–251 (SLST…VFQH), 254–275 (RLGL…AFWG), 278–298 (ALRE…TLLE), 302–323 (SLEA…TFGH), and 326–347 (RLRE…IFAA). The N-linked (GlcNAc...) asparagine glycan is linked to asparagine 73. The 58-residue stretch at 359-416 (NGWTCDCRLRGLKRWMGNWHSQGRLLTVFVQCRHPPALRGKYLDYLDDQLLQNGSCVD) folds into the LRRCT domain. N-linked (GlcNAc...) asparagine glycosylation is present at asparagine 411. Disordered stretches follow at residues 414–460 (CVDP…QQRG) and 486–562 (RRGP…QQGR). Positions 421 to 430 (PTAGSRQWPI) are enriched in polar residues. Composition is skewed to low complexity over residues 440 to 460 (PPAG…QQRG) and 494 to 508 (QSPS…APQS). A compositionally biased stretch (basic and acidic residues) spans 510 to 519 (DLHEKPERGR). Positions 524–545 (NLPQTEPTPTSEPASGTPSARD) are enriched in polar residues. The N-linked (GlcNAc...) asparagine glycan is linked to asparagine 589. A helical transmembrane segment spans residues 697–717 (LLTLVLLAINALLVLLALAAW). Topologically, residues 718 to 809 (GSRWLRRKLR…RREDHLLQRF (92 aa)) are cytoplasmic. Serine 798 carries the post-translational modification Phosphoserine.

Belongs to the lipopolysaccharide (LPS) receptor, a multi-protein complex containing at least CD14, MD-2 and TLR4. Interacts with TLR4; this interaction is greatly enhanced following LPS stimulation. Interacts with LPS. N-glycolysaled. In terms of tissue distribution, highly expressed in cortical astrocytes and in cerebellar granule neurons.

It localises to the membrane. Component of the TLR4 signaling complex. Mediates the innate immune response to bacterial lipopolysaccharide (LPS) leading to cytokine secretion and the inflammatory response. The sequence is that of TLR4 interactor with leucine rich repeats (Tril) from Rattus norvegicus (Rat).